A 220-amino-acid polypeptide reads, in one-letter code: Eukaryotic translation initiation factor 3 subunit B (220 aa).

Positions Met-1–Ala-94 are sufficient for interaction with HCR1 and TIF32. A sufficient for interaction with PIC8 region spans residues Met-1–Ile-220. Residues His-37–Asp-120 enclose the RRM domain.

This sequence belongs to the eIF-3 subunit B family. In terms of assembly, component of the eukaryotic translation initiation factor 3 (eIF-3) complex.

Its subcellular location is the cytoplasm. RNA-binding component of the eukaryotic translation initiation factor 3 (eIF-3) complex, which is involved in protein synthesis of a specialized repertoire of mRNAs and, together with other initiation factors, stimulates binding of mRNA and methionyl-tRNAi to the 40S ribosome. The eIF-3 complex specifically targets and initiates translation of a subset of mRNAs involved in cell proliferation. The polypeptide is Eukaryotic translation initiation factor 3 subunit B (TIF32) (Pichia angusta (Yeast)).